The chain runs to 243 residues: Glucosamine-6-phosphate deaminase (243 aa).

D67 (proton acceptor; for enolization step) is an active-site residue. N137 functions as the For ring-opening step in the catalytic mechanism. The Proton acceptor; for ring-opening step role is filled by H139. E144 serves as the catalytic For ring-opening step.

The protein belongs to the glucosamine/galactosamine-6-phosphate isomerase family. NagB subfamily.

The enzyme catalyses alpha-D-glucosamine 6-phosphate + H2O = beta-D-fructose 6-phosphate + NH4(+). It participates in amino-sugar metabolism; N-acetylneuraminate degradation; D-fructose 6-phosphate from N-acetylneuraminate: step 5/5. Its function is as follows. Catalyzes the reversible isomerization-deamination of glucosamine 6-phosphate (GlcN6P) to form fructose 6-phosphate (Fru6P) and ammonium ion. This Staphylococcus epidermidis (strain ATCC 12228 / FDA PCI 1200) protein is Glucosamine-6-phosphate deaminase.